Reading from the N-terminus, the 634-residue chain is Heat shock 70-related protein 1, mitochondrial (634 aa).

The N-terminal 20 residues, 1 to 20 (MFARRVCGSAAASAACLARH), are a transit peptide targeting the mitochondrion. Positions 538–614 (SEQHAEADRV…AAATDKLQKA (77 aa)) form a coiled coil.

The protein belongs to the heat shock protein 70 family.

It localises to the mitochondrion. This is Heat shock 70-related protein 1, mitochondrial (HSP70.1) from Leishmania major.